The chain runs to 178 residues: Caveolin-1 (178 aa).

Position 2 is an N-acetylserine (S2). A Phosphoserine modification is found at S2. The required for homooligomerization stretch occupies residues 2–94; it reads SGGKYVDSEG…WKASFTTFTV (93 aa). Over 2 to 104 the chain is Cytoplasmic; the sequence is SGGKYVDSEG…TKYWFYRLLS (103 aa). K5 is subject to N6-acetyllysine; alternate. K5 is covalently cross-linked (Glycyl lysine isopeptide (Lys-Gly) (interchain with G-Cter in ubiquitin); alternate). Residue Y6 is modified to Phosphotyrosine. S9 carries the phosphoserine modification. At Y14 the chain carries Phosphotyrosine; by ABL1. A Phosphotyrosine modification is found at Y25. Glycyl lysine isopeptide (Lys-Gly) (interchain with G-Cter in ubiquitin) cross-links involve residues K26, K30, K39, K47, and K57. Residues 82-94 form an interaction with CAVIN3 region; that stretch reads DGIWKASFTTFTV. An intramembrane region (helical) is located at residues 105 to 125; that stretch reads ALFGIPMALIWGIYFAILSFL. The Cytoplasmic portion of the chain corresponds to 126–178; sequence HIWAVVPCIKSFLIEIQCISRVYSIYVHTFCDPLFEAIGKIFSNIRINMQKEI. The segment at 131–142 is interacts with SPRY1, SPRY2, SPRY3 and SPRY4; that stretch reads VPCIKSFLIEIQ. 3 S-palmitoyl cysteine lipidation sites follow: C133, C143, and C156. The interacts with SPRY1, SPRY2, and SPRY4 stretch occupies residues 149-160; the sequence is SIYVHTFCDPLF. The interacts with SPRY1, SPRY2, SPRY3 and SPRY4 stretch occupies residues 167–178; the sequence is FSNIRINMQKEI.

The protein belongs to the caveolin family. Homooligomer. Interacts with GLIPR2. Interacts with NOSTRIN. Interacts with SNAP25 and STX1A. Interacts (via the N-terminus) with DPP4; the interaction is direct. Interacts with CTNNB1, CDH1 and JUP. Interacts with PACSIN2; this interaction induces membrane tubulation. Interacts with SLC7A9. Interacts with BMX and BTK. Interacts with TGFBR1. Interacts with CAVIN3 (via leucine-zipper domain) in a cholesterol-sensitive manner. Interacts with CAVIN1. Interacts with EHD2 in a cholesterol-dependent manner. Forms a ternary complex with UBXN6 and VCP; mediates CAV1 targeting to lysosomes for degradation. Interacts with ABCG1; this interaction regulates ABCG1-mediated cholesterol efflux. Interacts with NEU3; this interaction enhances NEU3 sialidase activity within caveola. Interacts (via C-terminus) with SPRY1, SPRY2 (via C-terminus), SPRY3, and SPRY4. Interacts with IGFBP5; this interaction allows trafficking of IGFBP5 from the plasma membrane to the nucleus. In terms of processing, phosphorylated at Tyr-14 by ABL1 in response to oxidative stress. Post-translationally, ubiquitinated. Undergo monoubiquitination and multi- and/or polyubiquitination. Monoubiquitination of N-terminal lysines promotes integration in a ternary complex with UBXN6 and VCP which promotes oligomeric CAV1 targeting to lysosomes for degradation. Ubiquitinated by ZNRF1; leading to degradation and modulation of the TLR4-mediated immune response.

It is found in the golgi apparatus membrane. Its subcellular location is the cell membrane. The protein resides in the membrane. It localises to the caveola. The protein localises to the membrane raft. Its function is as follows. May act as a scaffolding protein within caveolar membranes. Forms a stable heterooligomeric complex with CAV2 that targets to lipid rafts and drives caveolae formation. Mediates the recruitment of CAVIN proteins (CAVIN1/2/3/4) to the caveolae. Interacts directly with G-protein alpha subunits and can functionally regulate their activity. Involved in the costimulatory signal essential for T-cell receptor (TCR)-mediated T-cell activation. Its binding to DPP4 induces T-cell proliferation and NF-kappa-B activation in a T-cell receptor/CD3-dependent manner. Recruits CTNNB1 to caveolar membranes and may regulate CTNNB1-mediated signaling through the Wnt pathway. Negatively regulates TGFB1-mediated activation of SMAD2/3 by mediating the internalization of TGFBR1 from membrane rafts leading to its subsequent degradation. Binds 20(S)-hydroxycholesterol (20(S)-OHC). This is Caveolin-1 (CAV1) from Muntiacus muntjak (Barking deer).